Consider the following 301-residue polypeptide: ATP synthase gamma chain (301 aa).

Belongs to the ATPase gamma chain family. As to quaternary structure, F-type ATPases have 2 components, CF(1) - the catalytic core - and CF(0) - the membrane proton channel. CF(1) has five subunits: alpha(3), beta(3), gamma(1), delta(1), epsilon(1). CF(0) has three main subunits: a, b and c.

It localises to the cell inner membrane. Produces ATP from ADP in the presence of a proton gradient across the membrane. The gamma chain is believed to be important in regulating ATPase activity and the flow of protons through the CF(0) complex. The chain is ATP synthase gamma chain from Bordetella pertussis (strain Tohama I / ATCC BAA-589 / NCTC 13251).